Consider the following 116-residue polypeptide: Non-specific lipid-transfer protein (116 aa).

A signal peptide spans methionine 1–alanine 25. Cystine bridges form between cysteine 28/cysteine 75, cysteine 38/cysteine 52, cysteine 53/cysteine 98, and cysteine 73/cysteine 112.

It belongs to the plant LTP family.

Its function is as follows. Plant non-specific lipid-transfer proteins transfer phospholipids as well as galactolipids across membranes. May play a role in wax or cutin deposition in the cell walls of expanding epidermal cells and certain secretory tissues. This Gerbera hybrida (Daisy) protein is Non-specific lipid-transfer protein.